We begin with the raw amino-acid sequence, 294 residues long: 33 kDa chaperonin (294 aa).

2 disulfide bridges follow: C238/C240 and C271/C274.

Belongs to the HSP33 family. Post-translationally, under oxidizing conditions two disulfide bonds are formed involving the reactive cysteines. Under reducing conditions zinc is bound to the reactive cysteines and the protein is inactive.

The protein localises to the cytoplasm. In terms of biological role, redox regulated molecular chaperone. Protects both thermally unfolding and oxidatively damaged proteins from irreversible aggregation. Plays an important role in the bacterial defense system toward oxidative stress. This is 33 kDa chaperonin from Caldanaerobacter subterraneus subsp. tengcongensis (strain DSM 15242 / JCM 11007 / NBRC 100824 / MB4) (Thermoanaerobacter tengcongensis).